A 277-amino-acid chain; its full sequence is Protein CUSTOS (277 aa).

Disordered regions lie at residues 1–81 (MVAP…QTTP), 108–182 (TQQA…QRCR), and 238–277 (SVNGDPVLSGTKKKKKKKAKKAREASLCPPAECAAAEPKN). The segment covering 9–18 (SDSESSSSDS) has biased composition (low complexity). The residue at position 62 (serine 62) is a Phosphoserine. Residues 63–72 (RRREVNQHDE) are compositionally biased toward basic and acidic residues. Phosphothreonine is present on threonine 80. The stretch at 106 to 141 (KKTQQARLQQEAKEQQEAKEQQAAKEEQAAKKEEDG) forms a coiled coil. The span at 115-142 (QEAKEQQEAKEQQAAKEEQAAKKEEDGF) shows a compositional bias: basic and acidic residues. Residues serine 158 and serine 238 each carry the phosphoserine modification. The segment covering 248–258 (TKKKKKKKAKK) has biased composition (basic residues). The Nucleolar localization signal (NLS) motif lies at 249–256 (KKKKKKKA). Residues 265 to 277 (CPPAECAAAEPKN) show a composition bias toward low complexity.

It belongs to the CUSTOS family.

Its subcellular location is the nucleus envelope. Plays a role in the regulation of Wnt signaling pathway during early development. The chain is Protein CUSTOS from Rattus norvegicus (Rat).